Reading from the N-terminus, the 330-residue chain is Cyclin-dependent kinase 7 (330 aa).

The 285-residue stretch at tyrosine 5–phenylalanine 289 folds into the Protein kinase domain. ATP is bound by residues leucine 11–valine 19 and lysine 34. The active-site Proton acceptor is aspartate 130. Threonine 163 carries the phosphothreonine modification. The segment at lysine 305–aspartate 330 is disordered. Residues arginine 315–aspartate 330 are compositionally biased toward basic and acidic residues.

The protein belongs to the protein kinase superfamily. CMGC Ser/Thr protein kinase family. CDC2/CDKX subfamily. As to quaternary structure, catalytic component which, in association with cyclin H (cyh-1) and mat1, is likely to form the CAK complex.

It catalyses the reaction L-seryl-[protein] + ATP = O-phospho-L-seryl-[protein] + ADP + H(+). The enzyme catalyses L-threonyl-[protein] + ATP = O-phospho-L-threonyl-[protein] + ADP + H(+). The catalysed reaction is [DNA-directed RNA polymerase] + ATP = phospho-[DNA-directed RNA polymerase] + ADP + H(+). In terms of biological role, serine/threonine kinase involved in cell cycle control and in RNA polymerase II-mediated RNA transcription. Required for maintaining chromosome ploidy. May phosphorylate the large subunit of RNA polymerase II, ama-1. The sequence is that of Cyclin-dependent kinase 7 from Caenorhabditis elegans.